Reading from the N-terminus, the 306-residue chain is Arginase (306 aa).

4 residues coordinate Mn(2+): H96, D123, H125, and D127. Substrate contacts are provided by residues 125–129 (HTDFH), 136–138 (SGN), and D178. Residues D226 and D228 each contribute to the Mn(2+) site. Substrate-binding residues include T240 and E271.

This sequence belongs to the arginase family. Mn(2+) is required as a cofactor.

The catalysed reaction is L-arginine + H2O = urea + L-ornithine. Its pathway is nitrogen metabolism; urea cycle; L-ornithine and urea from L-arginine: step 1/1. The chain is Arginase (arcB) from Brucella abortus biovar 1 (strain 9-941).